A 176-amino-acid chain; its full sequence is Disulfide bond formation protein B (176 aa).

At 1–14 the chain is on the cytoplasmic side; that stretch reads MLRFLNQCSRGRGA. The chain crosses the membrane as a helical span at residues 15–31; the sequence is WLLMAFTALALEMVALW. The Periplasmic portion of the chain corresponds to 32–49; sequence FQHVMLLKPCVLCIYERC. A disulfide bridge links cysteine 41 with cysteine 44. The helical transmembrane segment at 50–65 threads the bilayer; that stretch reads ALFGVMGAGLVGAIAP. Residues 66–71 lie on the Cytoplasmic side of the membrane; the sequence is KTPLRY. The chain crosses the membrane as a helical span at residues 72-89; the sequence is VAMVIWIYSAWRGLQLAY. At 90-144 the chain is on the periplasmic side; it reads EHTMIQLHPSPFMTCDFMARFPDWLPLGKWLPQVFVASGDCAERQWSFLTLEMPQ. Cysteines 104 and 130 form a disulfide. The chain crosses the membrane as a helical span at residues 145–163; sequence WLLGIFAAYLVVAIAVVIA. Over 164–176 the chain is Cytoplasmic; sequence QAFKPKKRDLFGR.

It belongs to the DsbB family.

It is found in the cell inner membrane. In terms of biological role, required for disulfide bond formation in some periplasmic proteins. Acts by oxidizing the DsbA protein. In Salmonella paratyphi A (strain ATCC 9150 / SARB42), this protein is Disulfide bond formation protein B.